Reading from the N-terminus, the 290-residue chain is Eukaryotic translation initiation factor 3 subunit G (290 aa).

Residues 1–34 form a disordered region; sequence MSRLGNRAADWADDEEFDDPSALPAQQVTTNKDG. An RRM domain is found at 210–288; that stretch reads ATLRVTNVSE…LILRVEFAKR (79 aa).

This sequence belongs to the eIF-3 subunit G family. As to quaternary structure, component of the eukaryotic translation initiation factor 3 (eIF-3) complex.

It is found in the cytoplasm. Functionally, RNA-binding component of the eukaryotic translation initiation factor 3 (eIF-3) complex, which is involved in protein synthesis of a specialized repertoire of mRNAs and, together with other initiation factors, stimulates binding of mRNA and methionyl-tRNAi to the 40S ribosome. The eIF-3 complex specifically targets and initiates translation of a subset of mRNAs involved in cell proliferation. This subunit can bind 18S rRNA. The sequence is that of Eukaryotic translation initiation factor 3 subunit G from Neosartorya fischeri (strain ATCC 1020 / DSM 3700 / CBS 544.65 / FGSC A1164 / JCM 1740 / NRRL 181 / WB 181) (Aspergillus fischerianus).